Consider the following 218-residue polypeptide: MPGVVFDLDGTLVHSAPDIHAAVNRALAEEGAEPFSLAEITGFIGNGVPVLIKRVLAARGETPDGHRHAEMQDRFMKHYEADPTALTSVYPGAEAALRHLHSEGWRIALCTNKPYAASRQILSNFGILDLFDAIVGGDCLPQRKPDPAPLRAAAAALTEEVVLYVGDSEVDAATAEAAGLRFALFTEGYRHAPVHDLPHHGLFSHHDELPDLLRHLLA.

Asp7 serves as the catalytic Nucleophile. The Mg(2+) site is built by Asp7, Asp9, and Asp167.

The protein belongs to the HAD-like hydrolase superfamily. CbbY/CbbZ/Gph/YieH family. Requires Mg(2+) as cofactor.

It carries out the reaction 2-phosphoglycolate + H2O = glycolate + phosphate. It participates in organic acid metabolism; glycolate biosynthesis; glycolate from 2-phosphoglycolate: step 1/1. Functionally, specifically catalyzes the dephosphorylation of 2-phosphoglycolate. Is involved in the dissimilation of the intracellular 2-phosphoglycolate formed during the DNA repair of 3'-phosphoglycolate ends, a major class of DNA lesions induced by oxidative stress. This Cereibacter sphaeroides (strain ATCC 17025 / ATH 2.4.3) (Rhodobacter sphaeroides) protein is Phosphoglycolate phosphatase.